The sequence spans 416 residues: Homogentisate 1,2-dioxygenase (416 aa).

Histidine 275 functions as the Proton acceptor in the catalytic mechanism. Positions 318 and 324 each coordinate Fe cation. Tyrosine 333 and histidine 354 together coordinate homogentisate. Histidine 354 serves as a coordination point for Fe cation.

Belongs to the homogentisate dioxygenase family. As to quaternary structure, hexamer; dimer of trimers. The cofactor is Fe cation.

It carries out the reaction homogentisate + O2 = 4-maleylacetoacetate + H(+). It participates in amino-acid degradation; L-phenylalanine degradation; acetoacetate and fumarate from L-phenylalanine: step 4/6. Functionally, involved in the catabolism of homogentisate (2,5-dihydroxyphenylacetate or 2,5-OH-PhAc), a central intermediate in the degradation of phenylalanine and tyrosine. Catalyzes the oxidative ring cleavage of the aromatic ring of homogentisate to yield maleylacetoacetate. The sequence is that of Homogentisate 1,2-dioxygenase from Legionella pneumophila (strain Lens).